The sequence spans 315 residues: tRNA dimethylallyltransferase (315 aa).

14–21 (GPTASGKT) provides a ligand contact to ATP. 16–21 (TASGKT) contributes to the substrate binding site. Interaction with substrate tRNA stretches follow at residues 39-42 (DSAL), 163-167 (QRIQR), and 248-253 (RCVGYR).

This sequence belongs to the IPP transferase family. As to quaternary structure, monomer. Mg(2+) is required as a cofactor.

The catalysed reaction is adenosine(37) in tRNA + dimethylallyl diphosphate = N(6)-dimethylallyladenosine(37) in tRNA + diphosphate. In terms of biological role, catalyzes the transfer of a dimethylallyl group onto the adenine at position 37 in tRNAs that read codons beginning with uridine, leading to the formation of N6-(dimethylallyl)adenosine (i(6)A). In Paraburkholderia xenovorans (strain LB400), this protein is tRNA dimethylallyltransferase.